A 103-amino-acid polypeptide reads, in one-letter code: Acylphosphatase-2 (103 aa).

The 91-residue stretch at 13-103 folds into the Acylphosphatase-like domain; that stretch reads SVDYEVFGRV…LQYNGFSTRY (91 aa). Active-site residues include Arg28 and Asn46.

The protein belongs to the acylphosphatase family.

It catalyses the reaction an acyl phosphate + H2O = a carboxylate + phosphate + H(+). This Xenopus tropicalis (Western clawed frog) protein is Acylphosphatase-2 (acyp2).